A 333-amino-acid chain; its full sequence is GTPase Obg (333 aa).

An Obg domain is found at 1–159 (MKFIDEATIT…ATVRLELKLL (159 aa)). The segment at 63-85 (KQFAAPNGAPGEGRQKTGKSGDD) is disordered. Residues 75-84 (GRQKTGKSGD) show a composition bias toward basic and acidic residues. The region spanning 160–329 (ADVGLIGLPN…LKKHLFELLC (170 aa)) is the OBG-type G domain. GTP contacts are provided by residues 166–173 (GLPNAGKS), 191–195 (FTTLS), 213–216 (DIPG), 283–286 (NKMD), and 310–312 (SAA). Mg(2+) is bound by residues Ser173 and Thr193.

The protein belongs to the TRAFAC class OBG-HflX-like GTPase superfamily. OBG GTPase family. Monomer. Requires Mg(2+) as cofactor.

It is found in the cytoplasm. In terms of biological role, an essential GTPase which binds GTP, GDP and possibly (p)ppGpp with moderate affinity, with high nucleotide exchange rates and a fairly low GTP hydrolysis rate. Plays a role in control of the cell cycle, stress response, ribosome biogenesis and in those bacteria that undergo differentiation, in morphogenesis control. This Desulfosudis oleivorans (strain DSM 6200 / JCM 39069 / Hxd3) (Desulfococcus oleovorans) protein is GTPase Obg.